The primary structure comprises 65 residues: Large ribosomal subunit protein bL35 (65 aa).

The span at 1–15 shows a compositional bias: basic residues; sequence MPKMKTKKSASKRFQ. Residues 1-27 form a disordered region; it reads MPKMKTKKSASKRFQVRGSGSIKRGQA.

Belongs to the bacterial ribosomal protein bL35 family.

This chain is Large ribosomal subunit protein bL35, found in Bordetella petrii (strain ATCC BAA-461 / DSM 12804 / CCUG 43448).